The primary structure comprises 255 residues: MAVTSKAKMYAQGLQFYYGDFKALHDIDLTFEQNQVTALIGPSGCGKSTFLRCLNRMNDLIPISRVEGVIALDGENIYDPKVDVVELRRRVGMVFQKPNPFPKTVFENVAYGLRVNGVKDREYLEEKVEQSLRHAALWDEVKDRLQDSALGLSGGQQQRLCIARALAVEPEVLLMDEPASALDPIATQKIEELIHILKQQYTIIIVTHSMQQAARVSDVTAFFYMGRLIETGATEIMFTRPRNKQTEDYITGRFG.

The 242-residue stretch at 9–250 folds into the ABC transporter domain; the sequence is MYAQGLQFYY…PRNKQTEDYI (242 aa). 41–48 contributes to the ATP binding site; the sequence is GPSGCGKS.

Belongs to the ABC transporter superfamily. Phosphate importer (TC 3.A.1.7) family. The complex is composed of two ATP-binding proteins (PstB), two transmembrane proteins (PstC and PstA) and a solute-binding protein (PstS).

The protein localises to the cell inner membrane. It catalyses the reaction phosphate(out) + ATP + H2O = ADP + 2 phosphate(in) + H(+). Functionally, part of the ABC transporter complex PstSACB involved in phosphate import. Responsible for energy coupling to the transport system. This chain is Phosphate import ATP-binding protein PstB, found in Nitratidesulfovibrio vulgaris (strain ATCC 29579 / DSM 644 / CCUG 34227 / NCIMB 8303 / VKM B-1760 / Hildenborough) (Desulfovibrio vulgaris).